Consider the following 127-residue polypeptide: MPTIQQLVRTGRTQITKKSKSVALDSCPQRRGVCTRVYTTTPKKPNSAMRKVARVRLTNGNEVNAYIPGEGHNLQEHSIVLVRGGRVKDLPGVRYHIVRGALDTSGVAGRTQRRSKYGAKRPKEAKK.

At Asp-89 the chain carries 3-methylthioaspartic acid. Positions 101–127 are disordered; the sequence is ALDTSGVAGRTQRRSKYGAKRPKEAKK. The span at 111–127 shows a compositional bias: basic residues; sequence TQRRSKYGAKRPKEAKK.

This sequence belongs to the universal ribosomal protein uS12 family. Part of the 30S ribosomal subunit. Contacts proteins S8 and S17. May interact with IF1 in the 30S initiation complex.

Its function is as follows. With S4 and S5 plays an important role in translational accuracy. In terms of biological role, interacts with and stabilizes bases of the 16S rRNA that are involved in tRNA selection in the A site and with the mRNA backbone. Located at the interface of the 30S and 50S subunits, it traverses the body of the 30S subunit contacting proteins on the other side and probably holding the rRNA structure together. The combined cluster of proteins S8, S12 and S17 appears to hold together the shoulder and platform of the 30S subunit. This is Small ribosomal subunit protein uS12 from Flavobacterium johnsoniae (strain ATCC 17061 / DSM 2064 / JCM 8514 / BCRC 14874 / CCUG 350202 / NBRC 14942 / NCIMB 11054 / UW101) (Cytophaga johnsonae).